A 282-amino-acid polypeptide reads, in one-letter code: Protease HtpX homolog (282 aa).

The next 2 helical transmembrane spans lie at 6-26 and 28-48; these read TFIL…LIGG and QGVI…YFFS. H130 lines the Zn(2+) pocket. E131 is an active-site residue. H134 is a Zn(2+) binding site. 2 consecutive transmembrane segments (helical) span residues 140–160 and 177–197; these read ILIG…ANFA and ILMI…QMAI. E202 is a Zn(2+) binding site.

It belongs to the peptidase M48B family. The cofactor is Zn(2+).

It is found in the cell inner membrane. This chain is Protease HtpX homolog, found in Campylobacter hominis (strain ATCC BAA-381 / DSM 21671 / CCUG 45161 / LMG 19568 / NCTC 13146 / CH001A).